Here is a 193-residue protein sequence, read N- to C-terminus: Potassium-transporting ATPase KdpC subunit (193 aa).

The chain crosses the membrane as a helical span at residues 7–27 (PALVLFAALTLLTGVAYPLAV).

Belongs to the KdpC family. The system is composed of three essential subunits: KdpA, KdpB and KdpC.

It localises to the cell inner membrane. Its function is as follows. Part of the high-affinity ATP-driven potassium transport (or Kdp) system, which catalyzes the hydrolysis of ATP coupled with the electrogenic transport of potassium into the cytoplasm. This subunit acts as a catalytic chaperone that increases the ATP-binding affinity of the ATP-hydrolyzing subunit KdpB by the formation of a transient KdpB/KdpC/ATP ternary complex. This chain is Potassium-transporting ATPase KdpC subunit, found in Rhodospirillum rubrum (strain ATCC 11170 / ATH 1.1.1 / DSM 467 / LMG 4362 / NCIMB 8255 / S1).